Here is a 226-residue protein sequence, read N- to C-terminus: uncharacterized protein (226 aa).

A helical membrane pass occupies residues 121–141 (YLIGNIIGLPLTIPFILIPLI).

To yeast YDL183c.

It localises to the membrane. This is an uncharacterized protein from Schizosaccharomyces pombe (strain 972 / ATCC 24843) (Fission yeast).